The chain runs to 299 residues: MTTTNRLRIALQKKGRLSKDCNELLKQCGVKINWNEQRLIAYAENMPIEILRVRDDDIPGLVFEGVVDLGIIGENVLEEEELGRLARGEKIEYKKLRTLDFGGCRLSLAIDRDRTYNGVQDFVNSRIATSYPNLLKRYMNEKGVAFKSTLLNGSVEVAPSAGLADAICDLVSSGATLEANGLKEVEVIYQSKACLIQRAEPLSTEKQALVDRLLTRIQGVQQAAESKYIMLHAPKDKLKEITALLPGVENPTILPLANDSARVAMHVVSQENLFWETMEQLKEMGASSVLVLPIEKMLA.

This sequence belongs to the ATP phosphoribosyltransferase family. Long subfamily. Mg(2+) is required as a cofactor.

The protein resides in the cytoplasm. The enzyme catalyses 1-(5-phospho-beta-D-ribosyl)-ATP + diphosphate = 5-phospho-alpha-D-ribose 1-diphosphate + ATP. It participates in amino-acid biosynthesis; L-histidine biosynthesis; L-histidine from 5-phospho-alpha-D-ribose 1-diphosphate: step 1/9. Feedback inhibited by histidine. Its function is as follows. Catalyzes the condensation of ATP and 5-phosphoribose 1-diphosphate to form N'-(5'-phosphoribosyl)-ATP (PR-ATP). Has a crucial role in the pathway because the rate of histidine biosynthesis seems to be controlled primarily by regulation of HisG enzymatic activity. In Actinobacillus pleuropneumoniae serotype 5b (strain L20), this protein is ATP phosphoribosyltransferase.